The following is a 250-amino-acid chain: 2,3-bisphosphoglycerate-dependent phosphoglycerate mutase (250 aa).

Residues 10-17, 23-24, arginine 62, 89-92, lysine 100, 116-117, and 185-186 each bind substrate; these read RHGESQWN, TG, ERHY, RR, and GN. Catalysis depends on histidine 11, which acts as the Tele-phosphohistidine intermediate. Residue glutamate 89 is the Proton donor/acceptor of the active site.

It belongs to the phosphoglycerate mutase family. BPG-dependent PGAM subfamily. In terms of assembly, homodimer.

It carries out the reaction (2R)-2-phosphoglycerate = (2R)-3-phosphoglycerate. Its pathway is carbohydrate degradation; glycolysis; pyruvate from D-glyceraldehyde 3-phosphate: step 3/5. Its function is as follows. Catalyzes the interconversion of 2-phosphoglycerate and 3-phosphoglycerate. The sequence is that of 2,3-bisphosphoglycerate-dependent phosphoglycerate mutase from Yersinia enterocolitica serotype O:8 / biotype 1B (strain NCTC 13174 / 8081).